Here is a 133-residue protein sequence, read N- to C-terminus: MTLNLSVLTPNRIVWDSEVEEIVLSTNSGQIGILSNHAPIATAVDIGILRIRLNDQWLTMALMGGFARIGNNEITVLVNDAEKGSDIDPQEAQQTLEIAEANVKKAEGRRQKIEANLALRRARTRVEAINPIS.

The protein belongs to the ATPase epsilon chain family. In terms of assembly, F-type ATPases have 2 components, CF(1) - the catalytic core - and CF(0) - the membrane proton channel. CF(1) has five subunits: alpha(3), beta(3), gamma(1), delta(1), epsilon(1). CF(0) has three main subunits: a, b and c.

The protein resides in the plastid. The protein localises to the chloroplast thylakoid membrane. Its function is as follows. Produces ATP from ADP in the presence of a proton gradient across the membrane. The sequence is that of ATP synthase epsilon chain, chloroplastic from Atropa belladonna (Belladonna).